A 393-amino-acid chain; its full sequence is Dual specificity mitogen-activated protein kinase kinase 1 (393 aa).

Residues 1 to 27 (MPKKKPTPIQLNPAPDGSAVNGTSSAE) are disordered. A Protein kinase domain is found at 68–361 (FEKISELGAG…LKQLMVHAFI (294 aa)). ATP-binding positions include 74-82 (LGAGNGGVV) and K97. D190 acts as the Proton acceptor in catalysis. Phosphoserine; by RAF occurs at positions 218 and 222. The interval 270–307 (ELELMFGCQVEGDAAETPPRPRTPGRPLSSYGMDSRPP) is RAF1-binding. T286 is subject to Phosphothreonine. Phosphothreonine; by MAPK1 is present on T292. The residue at position 298 (S298) is a Phosphoserine; by PAK.

Belongs to the protein kinase superfamily. STE Ser/Thr protein kinase family. MAP kinase kinase subfamily. As to quaternary structure, found in a complex with at least BRAF, HRAS, MAP2K1, MAPK3/ERK1 and RGS14. Forms a heterodimer with MAP2K2/MEK2. Forms heterodimers with KSR2 which further dimerize to form tetramers. Interacts with KSR1 or KSR2 and BRAF; the interaction with KSR1 or KSR2 mediates KSR1-BRAF or KSR2-BRAF dimerization. Interacts with ARBB2, LAMTOR3, MAPK1/ERK2 and RAF1. Interacts with MAPK1/ERK2. Interacts with MORG1. Interacts with PPARG. Interacts with SGK1. Interacts with BIRC6/bruce. Interacts with KAT7; the interaction promotes KAT7 phosphorylation. Interacts with RAF1 and NEK10; the interaction is required for ERK1/2-signaling pathway activation in response to UV irradiation. Interacts with TRAF3IP3. Interacts with MOS. In terms of processing, phosphorylation at Ser-218 and Ser-222 by MAP kinase kinase kinases (RAF or MEKK1) positively regulates the kinase activity. Also phosphorylated at Thr-292 by MAPK1/ERK2 and at Ser-298 by PAK. MAPK1/ERK2 phosphorylation of Thr-292 occurs in response to cellular adhesion and leads to inhibition of Ser-298 phosphorylation by PAK. Autophosphorylated at Ser-218 and Ser-222, autophosphosphorylation is promoted by NEK10 following UV irradiation.

The protein resides in the cytoplasm. It is found in the cytoskeleton. Its subcellular location is the microtubule organizing center. It localises to the centrosome. The protein localises to the spindle pole body. The protein resides in the nucleus. It is found in the membrane. The catalysed reaction is L-seryl-[protein] + ATP = O-phospho-L-seryl-[protein] + ADP + H(+). The enzyme catalyses L-threonyl-[protein] + ATP = O-phospho-L-threonyl-[protein] + ADP + H(+). It catalyses the reaction L-tyrosyl-[protein] + ATP = O-phospho-L-tyrosyl-[protein] + ADP + H(+). With respect to regulation, ras proteins such as HRAS mediate the activation of RAF proteins such as RAF1 or BRAF which in turn activate extracellular signal-regulated kinases (ERK) through MAPK (mitogen-activated protein kinases) and ERK kinases MAP2K1/MEK1 and MAP2K2/MEK2. Activation occurs through phosphorylation of Ser-218 and Ser-222. MAP2K1/MEK1 binds KSR1 or KSR2 releasing the inhibitory intramolecular interaction between KSR1 or KSR2 protein kinase and N-terminal domains. This allows KSR1 or KSR2 dimerization with BRAF leading to BRAF activation and phosphorylation of MAP2K1. MAP2K1/MEK1 is also the target of negative feed-back regulation by its substrate kinases, such as MAPK1/ERK2. These phosphorylate MAP2K1/MEK1 on Thr-292, thereby facilitating dephosphorylation of the activating residues Ser-218 and Ser-222. Inhibited by serine/threonine phosphatase 2A. Its function is as follows. Dual specificity protein kinase which acts as an essential component of the MAP kinase signal transduction pathway. Binding of extracellular ligands such as growth factors, cytokines and hormones to their cell-surface receptors activates RAS and this initiates RAF1 activation. RAF1 then further activates the dual-specificity protein kinases MAP2K1/MEK1 and MAP2K2/MEK2. Both MAP2K1/MEK1 and MAP2K2/MEK2 function specifically in the MAPK/ERK cascade, and catalyze the concomitant phosphorylation of a threonine and a tyrosine residue in a Thr-Glu-Tyr sequence located in the extracellular signal-regulated kinases MAPK3/ERK1 and MAPK1/ERK2, leading to their activation and further transduction of the signal within the MAPK/ERK cascade. Activates BRAF in a KSR1 or KSR2-dependent manner; by binding to KSR1 or KSR2 releases the inhibitory intramolecular interaction between KSR1 or KSR2 protein kinase and N-terminal domains which promotes KSR1 or KSR2-BRAF dimerization and BRAF activation. Depending on the cellular context, this pathway mediates diverse biological functions such as cell growth, adhesion, survival and differentiation, predominantly through the regulation of transcription, metabolism and cytoskeletal rearrangements. One target of the MAPK/ERK cascade is peroxisome proliferator-activated receptor gamma (PPARG), a nuclear receptor that promotes differentiation and apoptosis. MAP2K1/MEK1 has been shown to export PPARG from the nucleus. The MAPK/ERK cascade is also involved in the regulation of endosomal dynamics, including lysosome processing and endosome cycling through the perinuclear recycling compartment (PNRC), as well as in the fragmentation of the Golgi apparatus during mitosis. This Oryctolagus cuniculus (Rabbit) protein is Dual specificity mitogen-activated protein kinase kinase 1 (MAP2K1).